Here is a 251-residue protein sequence, read N- to C-terminus: Aliphatic sulfonates import ATP-binding protein SsuB (251 aa).

Positions 19–238 constitute an ABC transporter domain; sequence GELRHVDKWY…PGEPGAHTER (220 aa). 51 to 58 contacts ATP; sequence GRSGSGKS.

The protein belongs to the ABC transporter superfamily. Aliphatic sulfonates importer (TC 3.A.1.17.2) family. As to quaternary structure, the complex is composed of two ATP-binding proteins (SsuB), two transmembrane proteins (SsuC) and a solute-binding protein (SsuA).

The protein resides in the cell membrane. It carries out the reaction ATP + H2O + aliphatic sulfonate-[sulfonate-binding protein]Side 1 = ADP + phosphate + aliphatic sulfonateSide 2 + [sulfonate-binding protein]Side 1.. Part of the ABC transporter complex SsuABC involved in aliphatic sulfonates import. Responsible for energy coupling to the transport system. This is Aliphatic sulfonates import ATP-binding protein SsuB from Mycobacterium avium (strain 104).